A 394-amino-acid chain; its full sequence is Ribulose bisphosphate carboxylase large chain (394 aa).

Lys5 is modified (N6,N6,N6-trimethyllysine). The substrate site is built by Asn114 and Thr164. The active-site Proton acceptor is the Lys166. Position 168 (Lys168) interacts with substrate. Residues Lys192, Asp194, and Glu195 each coordinate Mg(2+). Lys192 carries the N6-carboxylysine modification. His285 serves as the catalytic Proton acceptor. Substrate-binding residues include Arg286, His318, and Ser370.

This sequence belongs to the RuBisCO large chain family. Type I subfamily. As to quaternary structure, heterohexadecamer of 8 large chains and 8 small chains. The cofactor is Mg(2+).

The protein localises to the plastid. It is found in the chloroplast. It catalyses the reaction 2 (2R)-3-phosphoglycerate + 2 H(+) = D-ribulose 1,5-bisphosphate + CO2 + H2O. The enzyme catalyses D-ribulose 1,5-bisphosphate + O2 = 2-phosphoglycolate + (2R)-3-phosphoglycerate + 2 H(+). RuBisCO catalyzes two reactions: the carboxylation of D-ribulose 1,5-bisphosphate, the primary event in carbon dioxide fixation, as well as the oxidative fragmentation of the pentose substrate in the photorespiration process. Both reactions occur simultaneously and in competition at the same active site. The sequence is that of Ribulose bisphosphate carboxylase large chain (rbcL) from Cabomba caroliniana (Carolina fanwort).